The chain runs to 501 residues: Ell-associated factor Eaf (501 aa).

Polar residues-rich tracts occupy residues 138 to 149 (NMGQGQLHSQGA) and 173 to 192 (ENST…SRRN). 2 disordered regions span residues 138-226 (NMGQ…PAWD) and 256-501 (GHAN…DDDD). 2 stretches are compositionally biased toward low complexity: residues 200-221 (RNSP…SPQS) and 256-270 (GHAN…SATG). The residue at position 202 (serine 202) is a Phosphoserine. A compositionally biased stretch (polar residues) spans 271–283 (QTDFGSISSSSHI). Composition is skewed to low complexity over residues 302-314 (QRQS…QQQP) and 329-343 (QQQR…QRPP). Residues 393-408 (DSSDSDSGSDSDDSTE) show a composition bias toward acidic residues. Composition is skewed to low complexity over residues 416 to 437 (QQPV…HLNQ), 455 to 471 (QQQQ…QKQQ), and 483 to 501 (NDLL…DDDD).

It belongs to the EAF family.

The protein localises to the nucleus. Its function is as follows. Promotes transcriptional elongation by Su(Tpl)/ELL. Essential for development. This Drosophila yakuba (Fruit fly) protein is Ell-associated factor Eaf.